Reading from the N-terminus, the 181-residue chain is Dehydration-responsive element-binding protein 1E (181 aa).

Residues 14 to 26 carry the Nuclear localization signal motif; that stretch reads KKRAGRRIFKETR. The AP2/ERF DNA-binding region spans 29-86; it reads IYRGVRRRDGDKWVCEVREPIHQRRVWLGTYPTADMAARAHDVAVLALRGRSACLNFS.

The protein belongs to the AP2/ERF transcription factor family. ERF subfamily.

It localises to the nucleus. Transcriptional activator that binds specifically to the DNA sequence 5'-[AG]CCGAC-3'. Binding to the C-repeat/DRE element mediates cold or dehydration-inducible transcription. CBF/DREB1 factors play a key role in freezing tolerance and cold acclimation. The polypeptide is Dehydration-responsive element-binding protein 1E (DREB1E) (Arabidopsis thaliana (Mouse-ear cress)).